A 439-amino-acid polypeptide reads, in one-letter code: Sequestosome-1 (439 aa).

Position 2 is an N-acetylalanine (alanine 2). The segment at 2–48 (ASLTVKAYLLGKEEAAREIRRFSFCFSPEPEAEAAAGPGPCERLLSR) is interaction with LCK. Residues 3–100 (SLTVKAYLLG…DIFRIYIKEK (98 aa)) form the PB1 domain. Serine 24 is subject to Phosphoserine. The interaction with PRKCZ and dimerization stretch occupies residues 41–105 (PCERLLSRVA…YIKEKKECRR (65 aa)). The interval 48-78 (RVAVLFPALRPGGFQAHYRDEDGDLVAFSSD) is interaction with PAWR. The interval 119–221 (VHPNVICDGC…DGRPCPTAES (103 aa)) is interaction with GABRR3. Residues 120 to 170 (HPNVICDGCNGPVVGTRYKCSVCPDYDLCSVCEGKGLHREHSKLIFPNPFG) form a ZZ-type zinc finger. The Zn(2+) site is built by cysteine 125, cysteine 128, cysteine 139, and cysteine 142. Tyrosine 145 carries the phosphotyrosine modification. Zn(2+)-binding residues include cysteine 148, cysteine 151, histidine 157, and histidine 160. An LIM protein-binding region spans residues 167-217 (NPFGHLSDSFSHSRWLRKLKHGHFGWPGWEMGPPGNWSPRPPRAGDGRPCP). Serine 173, serine 175, and serine 204 each carry phosphoserine. The segment at 201 to 231 (GNWSPRPPRAGDGRPCPTAESASAPSEDPNV) is disordered. Residues 225-230 (PSEDPN) carry the TRAF6-binding motif. A phosphoserine mark is found at serine 246 and serine 263. Residues 259 to 389 (GGKRSRLTPT…ALYPHLPPEA (131 aa)) form a disordered region. Residues 265 to 292 (LTPTSAESSSTGTEDKSGTQPSSCSSEV) are compositionally biased toward polar residues. Residue threonine 266 is modified to Phosphothreonine. Residues 266–439 (TPTSAESSST…IQYSKHPPPL (174 aa)) form an interaction with NTRK1 region. 2 positions are modified to phosphoserine: serine 269 and serine 281. The S-palmitoyl cysteine moiety is linked to residue cysteine 288. Phosphoserine occurs at positions 305, 327, and 331. An MAP1LC3B-binding region spans residues 320 to 341 (QPEELMESDNCSGGDDDWTHLS). The short motif at 335–340 (DDWTHL) is the LIR element. Over residues 336–346 (DWTHLSSKEVD) the composition is skewed to basic and acidic residues. The interaction with KEAP1 stretch occupies residues 346–351 (DPSTGE). Phosphoserine occurs at positions 348, 354, 360, 364, and 365. Polar residues predominate over residues 350–372 (GELQSLQMPESEGPSSLDPSQEG). Residues 388-433 (EADPRLIESLSQMLSMGFSDEGGWLTRLLQTKNYDIGAALDTIQYS) enclose the UBA domain. The residue at position 402 (serine 402) is a Phosphoserine; by ULK1 and TBK1. Residue serine 406 is modified to Phosphoserine. Lysine 419 and lysine 434 each carry N6-acetyllysine; alternate. Lysine 419 is covalently cross-linked (Glycyl lysine isopeptide (Lys-Gly) (interchain with G-Cter in ubiquitin); alternate). Lysine 434 participates in a covalent cross-link: Glycyl lysine isopeptide (Lys-Gly) (interchain with G-Cter in SUMO2); alternate.

Homooligomer or heterooligomer; may form homotypic arrays. Dimerization interferes with ubiquitin binding. Component of a ternary complex with PAWR and PRKCZ. Forms a complex with JUB/Ajuba, PRKCZ and TRAF6. Identified in a complex with TRAF6 and CYLD. Identified in a heterotrimeric complex with ubiquitin and ZFAND5, where ZFAND5 and SQSTM1 both interact with the same ubiquitin molecule. Interacts (via LIR motif) with MAP1LC3A and MAP1LC3B, as well as with other ATG8 family members, including GABARAP, GABARAPL1 and GABARAPL2; these interactions are necessary for the recruitment MAP1 LC3 family members to inclusion bodies containing polyubiquitinated protein aggregates and for their degradation by autophagy. Interacts directly with PRKCI and PRKCZ. Interacts with EBI3, LCK, RASA1, NR2F2, NTRK1, NTRK2, NTRK3, NBR1, MAP2K5 and MAPKAPK5. Upon TNF-alpha stimulation, interacts with RIPK1 probably bridging IKBKB to the TNF-R1 complex composed of TNF-R1/TNFRSF1A, TRADD and RIPK1. Interacts with the proteasome subunits PSMD4 and PSMC2. Interacts with TRAF6. Interacts with 'Lys-63'-linked polyubiquitinated MAPT/TAU. Interacts with FHOD3. Interacts with CYLD. Interacts with SESN1. Interacts with SESN2. Interacts with ULK1. Interacts with UBD. Interacts with WDR81; the interaction is direct and regulates the interaction of SQSTM1 with ubiquitinated proteins. Interacts with WDFY3; this interaction is required to recruit WDFY3 to cytoplasmic bodies and to PML bodies. Interacts with LRRC25. Interacts with STING1; leading to relocalization of STING1 to autophagosomes. Interacts (when phosphorylated at Ser-348) with KEAP1; the interaction is direct and inactivates the BCR(KEAP1) complex by sequestering KEAP1 in inclusion bodies, promoting its degradation. Interacts with MOAP1; promoting dissociation of SQSTM1 inclusion bodies that sequester KEAP1. Interacts with GBP1. Interacts with TAX1BP1. Interacts with (ubiquitinated) PEX5; specifically binds PEX5 ubiquitinated at 'Lys-209' in response to reactive oxygen species (ROS). Interacts (via PB1 domain) with TNS2; the interaction leads to sequestration of TNS2 in cytoplasmic aggregates with SQSTM1 and promotes TNS2 ubiquitination and proteasomal degradation. Interacts with IRS1; the interaction is disrupted by the presence of tensin TNS2. Interacts with TRIM5. Interacts with TRIM11 (when ubiquitinated); promoting AIM2 recruitment to autophagosomes and autophagy-dependent degradation of AIM2. Interacts with TRIM13. Interacts with TRIM16. Interacts with TRIM23. Interacts with TRIM50. Interacts with TRIM55. Interacts with ECSIT; this interaction inhibits TLR4 signaling via functional regulation of the TRAF6-ECSIT complex. Interacts with GABRR1, GABRR2 and GABRR3. Interacts with WDR83. Interacts with GRB2. Interacts with USP12; the interaction is independent of USP12 deubiquitinase activity and may be involved in regulation of autophagic flux. Interacts with ASB6. Phosphorylated. Phosphorylation at Ser-406 by ULK1 destabilizes the UBA dimer interface and increases binding affinity to ubiquitinated proteins. Phosphorylation at Ser-406 also primes for subsequent phosphorylation at Ser-402. Phosphorylation at Ser-402 by CK2 or ULK1 promotes binding to ubiquitinated proteins by increasing the affinity between the UBA domain and polyubiquitin chains. Phosphorylation at Ser-402 by ULK1 is stimulated by SESN2. Phosphorylated at Ser-402 by TBK1, leading to promote relocalization of 'Lys-63'-linked ubiquitinated STING1 to autophagosomes. Phosphorylation at Ser-348 by ULK1 promotes interaction with KEAP1 and inactivation of the BCR(KEAP1) complex, promoting NFE2L2/NRF2 nuclear accumulation and expression of phase II detoxifying enzymes. Phosphorylated in vitro by TTN. In terms of processing, ubiquitinated by UBE2J1 and RNF26 at Lys-434: ubiquitinated SQSTM1 attracts specific vesicle-associated adapters, forming a molecular bridge that restrains cognate vesicles in the perinuclear region and organizes the endosomal pathway for efficient cargo transport. Ubiquitination by UBE2D2 and UBE2D3 increases its ability to bind polyubiquitin chains by destabilizing the UBA dimer interface. Deubiquitination by USP15 releases target vesicles for fast transport into the cell periphery. Ubiquitinated by the BCR(KEAP1) complex at Lys-419, increasing SQSTM1 sequestering activity and promoting its degradation. Ubiquitinated via 'Lys-29' and 'Lys-33'-linked polyubiquitination leading to xenophagic targeting of bacteria and inhibition of their replication. Post-translationally, acetylated at Lys-419 and Lys-434 by KAT5/TIP60, promotes activity by destabilizing the UBA dimer interface and increases binding affinity to ubiquitinated proteins. Deacetylated by HDAC6. Palmitoylation at Cys-288 by ZDHHC19 is required for efficient autophagic degradation of SQSTM1-cargo complexes by promoting affinity for ATG8 proteins and recruitment of p62 bodies to autophagosomes. Dealmitoylated at Cys-288 by LYPLA1. As to expression, ubiquitously expressed. In brain, mainly expressed by neurons, especially pyramidal neurons in the cerebral cortex and hippocampus. Also expressed by Purkinje cells and neurons in the dentate nucleus of the cerebellum and neurons of the basal ganglia (at protein level).

The protein localises to the cytoplasmic vesicle. It localises to the autophagosome. The protein resides in the preautophagosomal structure. Its subcellular location is the cytoplasm. It is found in the cytosol. The protein localises to the nucleus. It localises to the PML body. The protein resides in the late endosome. Its subcellular location is the lysosome. It is found in the endoplasmic reticulum. The protein localises to the myofibril. It localises to the sarcomere. Molecular adapter required for selective macroautophagy (aggrephagy) by acting as a bridge between polyubiquitinated proteins and autophagosomes. Promotes the recruitment of ubiquitinated cargo proteins to autophagosomes via multiple domains that bridge proteins and organelles in different steps. SQSTM1 first mediates the assembly and removal of ubiquitinated proteins by undergoing liquid-liquid phase separation upon binding to ubiquitinated proteins via its UBA domain, leading to the formation of insoluble cytoplasmic inclusions, known as p62 bodies. SQSTM1 then interacts with ATG8 family proteins on autophagosomes via its LIR motif, leading to p62 body recruitment to autophagosomes, followed by autophagic clearance of ubiquitinated proteins. SQSTM1 is itself degraded along with its ubiquitinated cargos. Also required to recruit ubiquitinated proteins to PML bodies in the nucleus. Also involved in autophagy of peroxisomes (pexophagy) in response to reactive oxygen species (ROS) by acting as a bridge between ubiquitinated PEX5 receptor and autophagosomes. Acts as an activator of the NFE2L2/NRF2 pathway via interaction with KEAP1: interaction inactivates the BCR(KEAP1) complex by sequestering the complex in inclusion bodies, promoting nuclear accumulation of NFE2L2/NRF2 and subsequent expression of cytoprotective genes. Promotes relocalization of 'Lys-63'-linked ubiquitinated STING1 to autophagosomes. Involved in endosome organization by retaining vesicles in the perinuclear cloud: following ubiquitination by RNF26, attracts specific vesicle-associated adapters, forming a molecular bridge that restrains cognate vesicles in the perinuclear region and organizes the endosomal pathway for efficient cargo transport. Sequesters tensin TNS2 into cytoplasmic puncta, promoting TNS2 ubiquitination and proteasomal degradation. May regulate the activation of NFKB1 by TNF-alpha, nerve growth factor (NGF) and interleukin-1. May play a role in titin/TTN downstream signaling in muscle cells. Adapter that mediates the interaction between TRAF6 and CYLD. Its function is as follows. More potent than isoform 2 to stimulate PRKCZ-dependent phosphorylation of KCNAB2. This chain is Sequestosome-1 (Sqstm1), found in Rattus norvegicus (Rat).